A 283-amino-acid chain; its full sequence is MSLLATLGLELDRALLPASGLGWLVDYGKLPLAPAPLGPYEVLGGALEGGLPGGGEPLAGDGFSDWMTERVDFTALLPLEAPLPPGTLPPPSPAPPDLEAMASLLKKELEQMEDFFLDAPLLPPPSPPPPPPPAAAPSLPLPLPLPTFDLPQPPTLDTLDLLAVYCRSEAGPGDSGLSTLPVPQQPPPLAPLPSPARPAPYPSPASTRGDRKQKKRDQNKSAALRYRQRKRAEGEALEGECQGLEARNRELRERAESVEREIQYVKDLLIEVYKARSQRTRST.

The interval 1-21 is required for protein stabilization induced by IL1B; it reads MSLLATLGLELDRALLPASGL. Lysine 29 is subject to N6-acetyllysine; by EP300. Disordered stretches follow at residues 118–154 and 168–241; these read DAPL…PQPP and SEAG…EGEC. An interaction with PTP4A1 region spans residues 119–218; that stretch reads APLLPPPSPP…GDRKQKKRDQ (100 aa). 2 stretches are compositionally biased toward pro residues: residues 121–145 and 183–203; these read LLPP…PLPL and PQQP…PYPS. Residues 209-272 form the bZIP domain; sequence GDRKQKKRDQ…QYVKDLLIEV (64 aa). The segment at 211-231 is basic motif; it reads RKQKKRDQNKSAALRYRQRKR. Positions 237-251 are leucine-zipper; it reads LEGECQGLEARNREL. Residue serine 257 is modified to Phosphoserine.

The protein belongs to the bZIP family. As to quaternary structure, binds DNA as a dimer. Interacts with PTP4A1/PRL-1. Interacts with CCND3, but not with CCND1 or CCND2. Interacts with HSPA1A or HSPA1B; the interaction protects ATF5 from degradation via proteasome-dependent and caspase-dependent processes. Interacts (via C-terminal region) with NPM1 (via C-terminal region); the interaction leads to loss of association between HSPA1A or HSPA1B and ATF5 and promotes ATF5 degradation via proteasome-dependent and caspase-dependent processes. Interacts with NLK; the interaction stabilizes ATF5 at the protein level in a kinase-independent manner. Interacts with alpha-tubulin, gamma-tubulin members TUBGCP2 and TUBGCP4, PCNT; the ATF5:PCNT:polyglutamylated tubulin (PGT) tripartite unites the mother centriole and the pericentriolar material (PCM) in the centrosome. Interacts with CEBPB and EP300; EP300 is required for ATF5 and CEBPB interaction and DNA binding. Post-translationally, acetylated at Lys-29 by EP300, the acetylation enhances the interaction with CEBPB, DNA-binding and transactivation activity. Ubiquitinated by CDC34 and UBE2B in order to be degraded by the proteasome. Cisplatin inhibits ubiquitination and proteasome-mediated degradation by inhibiting the interaction with CDC34. Ubiquitination and degradation by the proteasome are inhibited by NLK in a kinase-independent manner. In terms of processing, phosphorylated by NLK, probably at Ser-92 and Ser-126. As to expression, highly expressed in liver and at lower levels in heart, brain, lung, kidney, adipose tissue, and skeletal muscle. Expressed in some immature and in all mature olfactory sensory neurons (at protein level).

The protein resides in the cytoplasm. Its subcellular location is the nucleus. The protein localises to the cytoskeleton. It localises to the microtubule organizing center. It is found in the centrosome. In terms of biological role, transcription factor that either stimulates or represses gene transcription through binding of different DNA regulatory elements such as cAMP response element (CRE) (consensus: 5'-GTGACGT[AC][AG]-3'), ATF5-specific response element (ARE) (consensus: 5'-C[CT]TCT[CT]CCTT[AT]-3') but also the amino acid response element (AARE), present in many viral and cellular promoters. Critically involved, often in a cell type-dependent manner, in cell survival, proliferation, and differentiation. Its transcriptional activity is enhanced by CCND3 and slightly inhibited by CDK4. Important regulator of the cerebral cortex formation, functions in cerebral cortical neuroprogenitor cells to maintain proliferation and to block differentiation into neurons. Must be down-regulated in order for such cells to exit the cycle and differentiate. Participates in the pathways by which SHH promotes cerebellar granule neuron progenitor cells proliferation. Critical for survival of mature olfactory sensory neurons (OSN), directs expression of OSN-specific genes. May be involved in osteogenic differentiation. Promotes cell proliferation and survival by inducing the expression of EGR1 sinergistically with ELK1. Once acetylated by EP300, binds to ARE sequences on target genes promoters, such as BCL2 and EGR1. Plays an anti-apoptotic role through the transcriptional regulation of BCL2, this function seems to be cell type-dependent. Cooperates with NR1I3/CAR in the transcriptional activation of CYP2B6 in liver. In hepatic cells, represses CRE-dependent transcription and inhibits proliferation by blocking at G2/M phase. May act as a negative regulator of IL1B transduction pathway in liver. Upon IL1B stimulus, cooperates with NLK to activate the transactivation activity of C/EBP subfamily members. Besides its function of transcription factor, acts as a cofactor of CEBPB to activate CEBPA and promote adipocyte differentiation. Regulates centrosome dynamics in a cell-cycle- and centriole-age-dependent manner. Forms 9-foci symmetrical ring scaffold around the mother centriole to control centrosome function and the interaction between centrioles and pericentriolar material. In Mus musculus (Mouse), this protein is Cyclic AMP-dependent transcription factor ATF-5 (Atf5).